The sequence spans 257 residues: Receptor expression-enhancing protein 4 (257 aa).

2 helical membrane-spanning segments follow: residues 1 to 21 (MVSWMICRLVVLVFGMLCPAY) and 42 to 62 (WIVFALFMAAEIITDIFISWF). Residues S152 and S194 each carry the phosphoserine modification. The tract at residues 178-257 (PHQRPPIGYR…KKTVPSDMDS (80 aa)) is disordered. Position 196 is a phosphothreonine (T196). Phosphoserine is present on S202. Position 250 is a phosphothreonine (T250). At S253 the chain carries Phosphoserine.

It belongs to the DP1 family.

It is found in the endoplasmic reticulum membrane. Its function is as follows. Microtubule-binding protein required to ensure proper cell division and nuclear envelope reassembly by sequestering the endoplasmic reticulum away from chromosomes during mitosis. Probably acts by clearing the endoplasmic reticulum membrane from metaphase chromosomes. The chain is Receptor expression-enhancing protein 4 (REEP4) from Pongo abelii (Sumatran orangutan).